Here is a 530-residue protein sequence, read N- to C-terminus: Lanosterol 14-alpha demethylase CYP51 (530 aa).

Over 1 to 20 (MSATKSIVGEALEYVNIGLS) the chain is Lumenal. The helical transmembrane segment at 21–41 (HFLALPLAQRISLIIIIPFIY) threads the bilayer. Over 42 to 530 (NIVWQLLYSL…WEKRNPEQKI (489 aa)) the chain is Cytoplasmic. A Glycyl lysine isopeptide (Lys-Gly) (interchain with G-Cter in ubiquitin) cross-link involves residue Lys116. Tyr126 contributes to the lanosterol binding site. Gly314 serves as a coordination point for itraconazole. Residues Lys353 and Lys454 each participate in a glycyl lysine isopeptide (Lys-Gly) (interchain with G-Cter in ubiquitin) cross-link. Ser458 is subject to Phosphoserine. Cys470 is a binding site for heme.

Belongs to the cytochrome P450 family. Interacts with ERG28. The cofactor is heme.

The protein localises to the endoplasmic reticulum membrane. The enzyme catalyses a 14alpha-methyl steroid + 3 reduced [NADPH--hemoprotein reductase] + 3 O2 = a Delta(14) steroid + formate + 3 oxidized [NADPH--hemoprotein reductase] + 4 H2O + 4 H(+). It carries out the reaction a 14alpha-methyl steroid + reduced [NADPH--hemoprotein reductase] + O2 = a 14alpha-hydroxymethyl steroid + oxidized [NADPH--hemoprotein reductase] + H2O + H(+). It catalyses the reaction a 14alpha-hydroxymethyl steroid + reduced [NADPH--hemoprotein reductase] + O2 = a 14alpha-formyl steroid + oxidized [NADPH--hemoprotein reductase] + 2 H2O + H(+). The catalysed reaction is a 14alpha-formyl steroid + reduced [NADPH--hemoprotein reductase] + O2 = a Delta(14) steroid + formate + oxidized [NADPH--hemoprotein reductase] + H2O + 2 H(+). The enzyme catalyses lanosterol + 3 reduced [NADPH--hemoprotein reductase] + 3 O2 = 4,4-dimethyl-5alpha-cholesta-8,14,24-trien-3beta-ol + formate + 3 oxidized [NADPH--hemoprotein reductase] + 4 H2O + 4 H(+). It carries out the reaction lanosterol + reduced [NADPH--hemoprotein reductase] + O2 = 32-hydroxylanosterol + oxidized [NADPH--hemoprotein reductase] + H2O + H(+). It catalyses the reaction 32-hydroxylanosterol + reduced [NADPH--hemoprotein reductase] + O2 = 32-oxolanosterol + oxidized [NADPH--hemoprotein reductase] + 2 H2O + H(+). The catalysed reaction is 32-oxolanosterol + reduced [NADPH--hemoprotein reductase] + O2 = 4,4-dimethyl-5alpha-cholesta-8,14,24-trien-3beta-ol + formate + oxidized [NADPH--hemoprotein reductase] + H2O + 2 H(+). The protein operates within steroid biosynthesis; zymosterol biosynthesis; zymosterol from lanosterol: step 1/6. Functionally, sterol 14alpha-demethylase that plays a critical role in the third module of ergosterol biosynthesis pathway, being ergosterol the major sterol component in fungal membranes that participates in a variety of functions. The third module or late pathway involves the ergosterol synthesis itself through consecutive reactions that mainly occur in the endoplasmic reticulum (ER) membrane. Starting from lanosterol (lanosta-8,24-dien-3beta-ol), it catalyzes the three-step oxidative removal of the 14alpha-methyl group (C-32) of the sterol in the form of formate, and converts the sterol to 4,4-dimethyl-5alpha-cholesta-8,14,24-trien-3beta-ol, which is critical for ergosterol biosynthesis. Can demethylate substrates not intrinsic to yeast, such as eburicol (24-methylene-24,25-dihydrolanosterol) at a similar rate to lanosterol, and at a lower rate the 24,25-dihydrolanosterol (DHL) to 4,4-dimethyl-8,14-cholestadien-3beta-ol. This is Lanosterol 14-alpha demethylase CYP51 from Saccharomyces cerevisiae (strain ATCC 204508 / S288c) (Baker's yeast).